The following is a 98-amino-acid chain: Keratin-associated protein 3-3 (98 aa).

Ala2 is modified (N-acetylalanine). 3 consecutive repeat copies span residues 3 to 7 (CCAPL), 8 to 12 (CCSAR), and 47 to 51 (CCDNC). The segment at 3–59 (CCAPLCCSARTSPATTICSSDKFCRCGVCLPSTCPHTVWLLEPTCCDNCPPPCHIPQ) is 3 X 5 AA repeats of C-C-X(3).

Belongs to the KRTAP type 3 family. As to quaternary structure, interacts with hair keratins.

In the hair cortex, hair keratin intermediate filaments are embedded in an interfilamentous matrix, consisting of hair keratin-associated proteins (KRTAP), which are essential for the formation of a rigid and resistant hair shaft through their extensive disulfide bond cross-linking with abundant cysteine residues of hair keratins. The matrix proteins include the high-sulfur and high-glycine-tyrosine keratins. This Bos taurus (Bovine) protein is Keratin-associated protein 3-3.